A 506-amino-acid chain; its full sequence is MATELNPKNFPVLSYVLDRLPSFTAKSSSSSDVEPPPSKSDPSSSSNHSIEIVTQMPHLAHPDVLASMTNATADVSQTRSVLRTLGPRPDHETVDRARARLREIDASLSESFEEIALSPNDIDVAEKEQKRREAVEQEKIWYKSILKLNELHESYEKLLKEAEERLVRIYESAEKNAAAVAEEEAAEVEVNEEVVSILQQAAENPLDRVDLSGRKLKLLPEAFGKIQGLLVLNLYNNQLQAIPDSIAGLHNLLELDVSTNFLETLPDSIGLLSKLKILNVSCNKLTTLPDSICHCGSLVVLDASYNNLTYLPTNIGFELVKLEKLLIHLNKIRSLPTSIGEMRSLRYLDAHFNELNGLPNSFGLLTNLEYLNLSSNFSDLQDLPASFGDLISLQELDLSNNQIHSLPDAFGTLVNLTKLNLDQNPLVVPPDEVVKQGVDAVKMYMGKRWVSMLEEEEKMANMKDEMDQTNTDWLTRTTSKLKTYVTEVSEYLGSNPPRDPYLDQQL.

A disordered region spans residues 24-48; it reads TAKSSSSSDVEPPPSKSDPSSSSNH. A coiled-coil region spans residues 143–193; the sequence is KSILKLNELHESYEKLLKEAEERLVRIYESAEKNAAAVAEEEAAEVEVNEE. LRR repeat units follow at residues 203–225, 226–249, 251–272, 273–295, 297–319, 320–342, 344–364, 365–389, 390–412, and 414–436; these read ENPLDRVDLSGRKLKLLPEAFGK, IQGLLVLNLYNNQLQAIPDSIAGL, NLLELDVSTNFLETLPDSIGLL, SKLKILNVSCNKLTTLPDSICHC, SLVVLDASYNNLTYLPTNIGFEL, VKLEKLLIHLNKIRSLPTSIGEM, SLRYLDAHFNELNGLPNSFGL, LTNLEYLNLSSNFSDLQDLPASFGD, LISLQELDLSNNQIHSLPDAFGT, and VNLTKLNLDQNPLVVPPDEVVKQ. The short motif at 437 to 449 is the GVYW element; that stretch reads GVDAVKMYMGKRW.

This sequence belongs to the SHOC2 family. In terms of tissue distribution, widely expressed.

Leucine-rich repeat protein that likely mediates protein interactions, possibly in the context of signal transduction. PIRL1 acts redundantly with PIRL9 in the differentiation of microspores into pollen. This Arabidopsis thaliana (Mouse-ear cress) protein is Plant intracellular Ras-group-related LRR protein 1 (PIRL1).